The chain runs to 217 residues: N-(5'-phosphoribosyl)anthranilate isomerase (217 aa).

This sequence belongs to the TrpF family.

The enzyme catalyses N-(5-phospho-beta-D-ribosyl)anthranilate = 1-(2-carboxyphenylamino)-1-deoxy-D-ribulose 5-phosphate. It functions in the pathway amino-acid biosynthesis; L-tryptophan biosynthesis; L-tryptophan from chorismate: step 3/5. The protein is N-(5'-phosphoribosyl)anthranilate isomerase of Acaryochloris marina (strain MBIC 11017).